We begin with the raw amino-acid sequence, 123 residues long: Small ribosomal subunit protein uS12 (123 aa).

At Asp-89 the chain carries 3-methylthioaspartic acid.

This sequence belongs to the universal ribosomal protein uS12 family. Part of the 30S ribosomal subunit. Contacts proteins S8 and S17. May interact with IF1 in the 30S initiation complex.

With S4 and S5 plays an important role in translational accuracy. Its function is as follows. Interacts with and stabilizes bases of the 16S rRNA that are involved in tRNA selection in the A site and with the mRNA backbone. Located at the interface of the 30S and 50S subunits, it traverses the body of the 30S subunit contacting proteins on the other side and probably holding the rRNA structure together. The combined cluster of proteins S8, S12 and S17 appears to hold together the shoulder and platform of the 30S subunit. The protein is Small ribosomal subunit protein uS12 of Methylobacterium nodulans (strain LMG 21967 / CNCM I-2342 / ORS 2060).